A 518-amino-acid polypeptide reads, in one-letter code: 3-octaprenyl-4-hydroxybenzoate carboxy-lyase (518 aa).

Position 177 (Asn-177) interacts with Mn(2+). Residues 180 to 182 (IYR), 194 to 196 (RWL), and 199 to 200 (RG) each bind prenylated FMN. Glu-243 serves as a coordination point for Mn(2+). Asp-318 serves as the catalytic Proton donor.

It belongs to the UbiD family. In terms of assembly, homohexamer. Prenylated FMN serves as cofactor. It depends on Mn(2+) as a cofactor.

It localises to the cell membrane. It catalyses the reaction a 4-hydroxy-3-(all-trans-polyprenyl)benzoate + H(+) = a 2-(all-trans-polyprenyl)phenol + CO2. It participates in cofactor biosynthesis; ubiquinone biosynthesis. Catalyzes the decarboxylation of 3-octaprenyl-4-hydroxy benzoate to 2-octaprenylphenol, an intermediate step in ubiquinone biosynthesis. The sequence is that of 3-octaprenyl-4-hydroxybenzoate carboxy-lyase from Burkholderia multivorans (strain ATCC 17616 / 249).